We begin with the raw amino-acid sequence, 376 residues long: Putative F-box only protein 9 (376 aa).

In terms of domain architecture, F-box spans 1–44 (MSDLPPDLVEDILSRVPATSLKRLRFTCKQWNSLFKNRRFTEKH).

The protein is Putative F-box only protein 9 (FBX9) of Arabidopsis thaliana (Mouse-ear cress).